The primary structure comprises 144 residues: Transcriptional regulator SlyA (144 aa).

The HTH marR-type domain occupies 2 to 135 (ESSLGSDLAR…LNNIIAKLER (134 aa)). The H-T-H motif DNA-binding region spans 49–72 (QIQLAKAIGIEQPSLVRTLDQLES).

This sequence belongs to the SlyA family. As to quaternary structure, homodimer.

Its function is as follows. Transcription regulator that can specifically activate or repress expression of target genes. This Blochmanniella floridana protein is Transcriptional regulator SlyA.